Reading from the N-terminus, the 1010-residue chain is Translation initiation factor IF-2 (1010 aa).

Disordered regions lie at residues 54–350 (KGLA…FEDD) and 364–420 (PSFT…RPES). Over residues 57-70 (ASSTSKNSTGQRES) the composition is skewed to polar residues. Residues 112–124 (ISPPRPPVKPLVA) are compositionally biased toward pro residues. Residues 145–155 (HSPSVKETPTE) are compositionally biased toward polar residues. Positions 200–258 (DRPRGEKRERGESENAPSPERRVGLAKPEKPTLNRKPDGKSPKLAEPAREVRETVELKR) are enriched in basic and acidic residues. Positions 378–389 (TAKAAPPGTPTA) are enriched in low complexity. Residues 406–419 (KSERQEPQEEKRPE) are compositionally biased toward basic and acidic residues. In terms of domain architecture, tr-type G spans 502–675 (RRPPVVTIMG…LLVAEVEELV (174 aa)). Residues 511 to 518 (GHVDHGKT) form a G1 region. Position 511 to 518 (511 to 518 (GHVDHGKT)) interacts with GTP. The segment at 536–540 (GITQH) is G2. Residues 561–564 (DTPG) form a G3 region. GTP contacts are provided by residues 561-565 (DTPGH) and 615-618 (NKVD). Residues 615–618 (NKVD) form a G4 region. The segment at 651-653 (SAL) is G5.

It belongs to the TRAFAC class translation factor GTPase superfamily. Classic translation factor GTPase family. IF-2 subfamily.

It localises to the cytoplasm. In terms of biological role, one of the essential components for the initiation of protein synthesis. Protects formylmethionyl-tRNA from spontaneous hydrolysis and promotes its binding to the 30S ribosomal subunits. Also involved in the hydrolysis of GTP during the formation of the 70S ribosomal complex. This chain is Translation initiation factor IF-2, found in Microcystis aeruginosa (strain NIES-843 / IAM M-2473).